Consider the following 330-residue polypeptide: Aspartate--ammonia ligase (330 aa).

It belongs to the class-II aminoacyl-tRNA synthetase family. AsnA subfamily.

Its subcellular location is the cytoplasm. It catalyses the reaction L-aspartate + NH4(+) + ATP = L-asparagine + AMP + diphosphate + H(+). The protein operates within amino-acid biosynthesis; L-asparagine biosynthesis; L-asparagine from L-aspartate (ammonia route): step 1/1. The chain is Aspartate--ammonia ligase from Yersinia enterocolitica serotype O:8 / biotype 1B (strain NCTC 13174 / 8081).